The following is a 345-amino-acid chain: Trace amine-associated receptor 6 (345 aa).

The Extracellular segment spans residues 1–32 (MSSNSSLLVAVQLCYANVNGSCVKIPFSPGSR). N-linked (GlcNAc...) asparagine glycosylation is found at Asn4 and Asn19. 2 disulfides stabilise this stretch: Cys22–Cys186 and Cys105–Cys190. The chain crosses the membrane as a helical span at residues 33-53 (VILYIVFGFGAVLAVFGNLLV). Residues 54–68 (MISILHFKQLHSPTN) lie on the Cytoplasmic side of the membrane. The chain crosses the membrane as a helical span at residues 69-89 (FLVASLACADFLVGVTVMPFS). The Extracellular portion of the chain corresponds to 90 to 107 (MVRTVESCWYFGRSFCTF). A helical transmembrane segment spans residues 108–128 (HTCCDVAFCYSSLFHLCFISI). Topologically, residues 129-147 (DRYIAVTDPLVYPTKFTVS) are cytoplasmic. A helical transmembrane segment spans residues 148 to 168 (VSGICISVSWILPLMYSGAVF). Over 169–202 (YTGVYDDGLEELSDALNCIGGCQTVVNQNWVLTD) the chain is Extracellular. A helical transmembrane segment spans residues 203–223 (FLSFFIPTFIMIILYGNIFLV). Residues 224 to 259 (ARRQAKKIENTGSKTESSSESYKARVARRERKAAKT) lie on the Cytoplasmic side of the membrane. The helical transmembrane segment at 260-276 (LGVTVVAFMISWLPYSI) threads the bilayer. Residues 277–282 (DSLIDA) lie on the Extracellular side of the membrane. The chain crosses the membrane as a helical span at residues 283 to 302 (FMGFITPACIYEICCWCAYY). Over 303–345 (NSAMNPLIYALFYPWFRKAIKVIVTGQVLKNSSATMNLFSEHI) the chain is Cytoplasmic.

The protein belongs to the G-protein coupled receptor 1 family. As to expression, expressed at low abundance in various brain tissues, as well as in fetal liver, but not in the cerebellum or placenta. In the brain, comparable levels of expression in basal ganglia, frontal cortex, substantia nigra, amygdala and hippocampus, highest expression in hippocampus and lowest expression in basal ganglia.

It is found in the cell membrane. Its function is as follows. Olfactory receptor specific for trace amines, such as beta-phenylethylamine (beta-PEA). Trace amine compounds are enriched in animal body fluids and act on trace amine-associated receptors (TAARs) to elicit both intraspecific and interspecific innate behaviors. Beta-PEA-binding causes a conformation change that triggers signaling via G(s)-class of G alpha proteins (GNAL or GNAS). This is Trace amine-associated receptor 6 from Homo sapiens (Human).